Reading from the N-terminus, the 888-residue chain is Leukocyte tyrosine kinase receptor (888 aa).

Positions 1-16 (MGCSHRLLLWLGAAGT) are cleaved as a signal peptide. Topologically, residues 17-421 (ILCSNSEFQT…CMDLPTTASP (405 aa)) are extracellular. Cystine bridges form between cysteine 73–cysteine 86 and cysteine 168–cysteine 179. The interval 226 to 294 (LVAAGGGGRS…RSPREGAEGG (69 aa)) is disordered. The span at 260–273 (GSGGRGGAAGGGSG) shows a compositional bias: gly residues. A disulfide bridge connects residues cysteine 297 and cysteine 319. Asparagine 377 and asparagine 409 each carry an N-linked (GlcNAc...) asparagine glycan. Residues 422 to 446 (LILMGAVVAALALSLLMMCAVLILV) traverse the membrane as a helical segment. The Cytoplasmic portion of the chain corresponds to 447–888 (NQKCQGLWGT…SSSSSIPGIQ (442 aa)). Positions 506–782 (VTLLRALGHG…IQYCTQDPDV (277 aa)) constitute a Protein kinase domain. Residues 512-520 (LGHGAFGEV) and lysine 540 contribute to the ATP site. The active-site Proton acceptor is aspartate 639. Tyrosine 672 carries the phosphotyrosine; by autocatalysis modification. The tract at residues 857 to 888 (TYGSWTPRGPQGEDTGIEHCNGSSSSSIPGIQ) is disordered. A compositionally biased stretch (polar residues) spans 877-888 (NGSSSSSIPGIQ).

The protein belongs to the protein kinase superfamily. Tyr protein kinase family. Insulin receptor subfamily. As to quaternary structure, homodimer; homodimerizes following ligand-binding. Part of a complex including LTK, TNK2 and GRB2, in which GRB2 promotes LTK recruitment by TNK2. Phosphorylated at tyrosine residues by autocatalysis, which activates kinase activity. Subsets of lymphoid and neuronal cells.

It localises to the cell membrane. It is found in the endoplasmic reticulum. The enzyme catalyses L-tyrosyl-[protein] + ATP = O-phospho-L-tyrosyl-[protein] + ADP + H(+). Its activity is regulated as follows. Activated by ligand-binding, leading to homodimerization and autophosphorylation. In terms of biological role, receptor with a tyrosine-protein kinase activity. Following activation by ALKAL1 or ALKAL2 ligands at the cell surface, transduces an extracellular signal into an intracellular response. Ligand-binding to the extracellular domain induces tyrosine kinase activation, leading to activation of the mitogen-activated protein kinase (MAPK) pathway. Phosphorylates almost exclusively at the first tyrosine of the Y-x-x-x-Y-Y motif. The exact function of this protein is not known; studies with chimeric proteins demonstrate its ability to promote growth and specifically neurite outgrowth, and cell survival. Involved in regulation of the secretory pathway involving endoplasmic reticulum (ER) export sites (ERESs) and ER to Golgi transport. The protein is Leukocyte tyrosine kinase receptor of Mus musculus (Mouse).